The primary structure comprises 338 residues: Ferredoxin--NADP reductase (338 aa).

FAD is bound by residues aspartate 32, glutamine 40, tyrosine 45, valine 85, phenylalanine 120, aspartate 287, and threonine 327.

The protein belongs to the ferredoxin--NADP reductase type 2 family. In terms of assembly, homodimer. It depends on FAD as a cofactor.

The enzyme catalyses 2 reduced [2Fe-2S]-[ferredoxin] + NADP(+) + H(+) = 2 oxidized [2Fe-2S]-[ferredoxin] + NADPH. This chain is Ferredoxin--NADP reductase, found in Wolbachia pipientis wMel.